Here is a 224-residue protein sequence, read N- to C-terminus: Uracil-DNA glycosylase (224 aa).

Catalysis depends on aspartate 62, which acts as the Proton acceptor.

Belongs to the uracil-DNA glycosylase (UDG) superfamily. UNG family.

Its subcellular location is the cytoplasm. The catalysed reaction is Hydrolyzes single-stranded DNA or mismatched double-stranded DNA and polynucleotides, releasing free uracil.. Excises uracil residues from the DNA which can arise as a result of misincorporation of dUMP residues by DNA polymerase or due to deamination of cytosine. The chain is Uracil-DNA glycosylase from Aliivibrio fischeri (strain ATCC 700601 / ES114) (Vibrio fischeri).